Reading from the N-terminus, the 139-residue chain is Hydrogenase maturation factor HypA (139 aa).

Ni(2+) is bound at residue His-2. The Zn(2+) site is built by Cys-75, Cys-78, Cys-111, and Cys-114.

Belongs to the HypA/HybF family.

Functionally, involved in the maturation of [NiFe] hydrogenases. Required for nickel insertion into the metal center of the hydrogenase. The chain is Hydrogenase maturation factor HypA from Ignicoccus hospitalis (strain KIN4/I / DSM 18386 / JCM 14125).